Consider the following 336-residue polypeptide: uncharacterized protein (336 aa).

This sequence belongs to the GppA/Ppx family.

This is an uncharacterized protein from Streptomyces coelicolor (strain ATCC BAA-471 / A3(2) / M145).